Consider the following 1091-residue polypeptide: AP-3 complex subunit beta-1 (1091 aa).

Disordered regions lie at residues M1 to G32 and E267 to P290. The segment covering E267 to K288 has biased composition (basic and acidic residues). S276 and S609 each carry phosphoserine. Residues A664–R807 form a disordered region. Basic and acidic residues predominate over residues A667–S678. Acidic residues-rich tracts occupy residues D679 to S695 and E703 to S718. Residues S719 to R736 show a composition bias toward basic and acidic residues. A phosphoserine mark is found at S748 and S750. Positions S763–E775 are enriched in low complexity. The segment covering S776–E789 has biased composition (acidic residues). Positions S790–R807 are enriched in basic and acidic residues.

It belongs to the adaptor complexes large subunit family. Adaptor protein complex 3 (AP-3) is a heterotetramer composed of two large adaptins (delta-type subunit AP3D1 and beta-type subunit AP3B1 or AP3B2), a medium adaptin (mu-type subunit AP3M1 or AP3M2) and a small adaptin (sigma-type subunit APS1 or AP3S2). AP-3 associates with the BLOC-1 complex. Interacts with KIF3A; interaction is direct; interaction is impaired by pyrophosphorylation of AP3B1. Phosphorylated on serine residues. Post-translationally, pyrophosphorylation by 5-diphosphoinositol pentakisphosphate (5-IP7) impairs interaction with KIF3A. Serine pyrophosphorylation is achieved by Mg(2+)-dependent, but enzyme independent transfer of a beta-phosphate from a inositol pyrophosphate to a pre-phosphorylated serine residue.

The protein resides in the cytoplasmic vesicle. Its subcellular location is the clathrin-coated vesicle membrane. It localises to the golgi apparatus. Its function is as follows. Subunit of non-clathrin- and clathrin-associated adaptor protein complex 3 (AP-3) that plays a role in protein sorting in the late-Golgi/trans-Golgi network (TGN) and/or endosomes. The AP complexes mediate both the recruitment of clathrin to membranes and the recognition of sorting signals within the cytosolic tails of transmembrane cargo molecules. AP-3 appears to be involved in the sorting of a subset of transmembrane proteins targeted to lysosomes and lysosome-related organelles. In concert with the BLOC-1 complex, AP-3 is required to target cargos into vesicles assembled at cell bodies for delivery into neurites and nerve terminals. The protein is AP-3 complex subunit beta-1 (AP3B1) of Canis lupus familiaris (Dog).